The sequence spans 366 residues: Putative integrase/recombinase HI_1572 (366 aa).

Residues 54–133 enclose the Core-binding (CB) domain; the sequence is ITLDELIDKY…SLSALMAKTI (80 aa). The Tyr recombinase domain maps to 168–331; that stretch reads IFVSGYDVEH…DMAEGYKTKA (164 aa). Catalysis depends on residues Arg-201, Lys-226, and His-308. Tyr-318 serves as the catalytic O-(3'-phospho-DNA)-tyrosine intermediate.

The protein belongs to the 'phage' integrase family.

In Haemophilus influenzae (strain ATCC 51907 / DSM 11121 / KW20 / Rd), this protein is Putative integrase/recombinase HI_1572.